The primary structure comprises 435 residues: Ornithine decarboxylase (435 aa).

N6-(pyridoxal phosphate)lysine is present on Lys98. Pyridoxal 5'-phosphate is bound by residues Ser230, Gly268, and 301 to 304 (EPGR). Residue 344–345 (YD) participates in substrate binding. The Proton donor; shared with dimeric partner role is filled by Cys380. Asp381 serves as a coordination point for substrate. Residue Tyr409 participates in pyridoxal 5'-phosphate binding.

It belongs to the Orn/Lys/Arg decarboxylase class-II family. As to quaternary structure, homodimer. Only the dimer is catalytically active, as the active sites are constructed of residues from both monomers. Pyridoxal 5'-phosphate is required as a cofactor.

It carries out the reaction L-ornithine + H(+) = putrescine + CO2. It functions in the pathway amine and polyamine biosynthesis; putrescine biosynthesis via L-ornithine pathway; putrescine from L-ornithine: step 1/1. With respect to regulation, inhibited by antizyme (AZ) in response to polyamine levels. AZ inhibits the assembly of the functional homodimer by binding to ODC monomers and targeting them for ubiquitin-independent proteolytic destruction by the 26S proteasome. Its function is as follows. Catalyzes the first and rate-limiting step of polyamine biosynthesis that converts ornithine into putrescine, which is the precursor for the polyamines, spermidine and spermine. Polyamines are essential for cell proliferation and are implicated in cellular processes, ranging from DNA replication to apoptosis. The chain is Ornithine decarboxylase (ODC) from Capsicum annuum (Capsicum pepper).